Consider the following 233-residue polypeptide: Small ribosomal subunit protein uS3 (233 aa).

A KH type-2 domain is found at 39-107 (VRKYLTKELE…PAQINIAEVR (69 aa)).

This sequence belongs to the universal ribosomal protein uS3 family. In terms of assembly, part of the 30S ribosomal subunit. Forms a tight complex with proteins S10 and S14.

Its function is as follows. Binds the lower part of the 30S subunit head. Binds mRNA in the 70S ribosome, positioning it for translation. The chain is Small ribosomal subunit protein uS3 from Pectobacterium carotovorum subsp. carotovorum (strain PC1).